We begin with the raw amino-acid sequence, 323 residues long: Putative divalent cation/proton antiporter TMEM165 (323 aa).

The N-terminal stretch at 1–33 (MAASARGSGRAPTRRLLVLLLLPLLWAPAGVRA) is a signal peptide. Residues 34-88 (GPEEDLSHRNQEPPAPAQQLQPQPAAVQGLEPARAEKGFTPAAPVHTNREDAATQ) are Lumenal-facing. The span at 35–44 (PEEDLSHRNQ) shows a compositional bias: basic and acidic residues. Residues 35–60 (PEEDLSHRNQEPPAPAQQLQPQPAAV) are disordered. Over residues 50 to 59 (AQQLQPQPAA) the composition is skewed to low complexity. The chain crosses the membrane as a helical span at residues 89–109 (ANLGFIHAFVAAISVIIVSEL). At 110–126 (GDKTFFIAAIMAMRYNR) the chain is on the cytoplasmic side. A helical membrane pass occupies residues 127-147 (LTVLAGAMLALALMTCLSVLF). Residues 148-151 (GYAT) lie on the Lumenal side of the membrane. The chain crosses the membrane as a helical span at residues 152 to 172 (TVIPRVYTYYVSTALFAIFGI). The Cytoplasmic portion of the chain corresponds to 173–227 (RMLREGLKMSPDEGQEELEEVQAELKKKDEEFQRTKLLNGPDVETGTSTAIPQKK). A coiled-coil region spans residues 184-211 (DEGQEELEEVQAELKKKDEEFQRTKLLN). A helical transmembrane segment spans residues 228 to 248 (WLHFISPIFVQALTLTFLAEW). Residues 249–266 (GDRSQLTTIVLAAREDPY) lie on the Lumenal side of the membrane. Residues 267–287 (GVAVGGTVGHCLCTGLAVIGG) form a helical membrane-spanning segment. Residues 288-298 (RMIAQKISVRT) lie on the Cytoplasmic side of the membrane. A helical transmembrane segment spans residues 299 to 319 (VTIIGGIVFLAFAFSALFISP). Residues 320–323 (ESGF) are Lumenal-facing.

It belongs to the GDT1 family.

The protein localises to the golgi apparatus membrane. The catalysed reaction is Ca(2+)(in) + n H(+)(out) = Ca(2+)(out) + n H(+)(in). It carries out the reaction Mn(2+)(in) + n H(+)(out) = Mn(2+)(out) + n H(+)(in). Functionally, putative divalent cation:proton antiporter that exchanges calcium or manganese ions for protons across the Golgi membrane. Mediates the reversible transport of calcium or manganese to the Golgi lumen driven by the proton gradient and possibly the membrane potential generated by V-ATPase. Provides calcium or manganese cofactors to resident Golgi enzymes and contributes to the maintenance of an acidic luminal Golgi pH required for proper functioning of the secretory pathway. Promotes Ca(2+) storage within the Golgi lumen of the mammary epithelial cells to be then secreted into milk. The transport mechanism and stoichiometry remains to be elucidated. In Rattus norvegicus (Rat), this protein is Putative divalent cation/proton antiporter TMEM165.